Here is a 158-residue protein sequence, read N- to C-terminus: S-ribosylhomocysteine lyase (158 aa).

Fe cation-binding residues include H54, H58, and C124.

It belongs to the LuxS family. In terms of assembly, homodimer. Fe cation serves as cofactor.

The catalysed reaction is S-(5-deoxy-D-ribos-5-yl)-L-homocysteine = (S)-4,5-dihydroxypentane-2,3-dione + L-homocysteine. Its function is as follows. Involved in the synthesis of autoinducer 2 (AI-2) which is secreted by bacteria and is used to communicate both the cell density and the metabolic potential of the environment. The regulation of gene expression in response to changes in cell density is called quorum sensing. Catalyzes the transformation of S-ribosylhomocysteine (RHC) to homocysteine (HC) and 4,5-dihydroxy-2,3-pentadione (DPD). In Limosilactobacillus reuteri (Lactobacillus reuteri), this protein is S-ribosylhomocysteine lyase.